The following is a 636-amino-acid chain: MTYELLNTIDAPAELRRLDRRQLGTLADELRAFVLESVAQTGGHLSSNLGTVELTIALHYVFNTPDDRIVWDVGHQSYPHKILTGRREQMATLRQLDGISGFPRRSESPYDTFGTAHSSTSISAALGMALGAKTQGENRVAIAVIGDGAMSAGMAFEAMNNAGVYRNLPLVVVLNDNDMSISPPVGALNRYLARLMSGQFYAATKKGVEKLLSVAPPVLEFAKRFEEHAKGMLVPATMFEEFGFNYIGPIDGHDLESLVPTLQNIRQRALEGGRPQFLHVVTKKGQGYKLAEADPILYHGPGKFNPQEGIKPAARPAKVSYTQVFGQWLCDMAAADKRLVGITPAMREGSGMVEFEQRFPDRYYDVGIAEQHAVTFAGGLACEGLKPVVAIYSTFLQRGYDQLIHDVALQNLPVVFALDRAGLVGADGATHAGAYDMAYLRCIPNMMVMAPADENECRQLLSTAFAQDCPTAVRYPRGAGTGVVVQPTLEPLPVGKAEVRRASTAPAGQRVVILAFGSMVAPAAAAAERLDATVVNMRFVKPLDAACVLEMARTHDYVVTVEEGCVMGGAGSACLEALAAAGVATPVLQLGLPDRFVDHGDHAALLALCGLDANGILASIRERFAVQPRAVQPRVA.

Residues His-75 and 116–118 (AHS) each bind thiamine diphosphate. A Mg(2+)-binding site is contributed by Asp-147. Residues 148-149 (GA), Asn-177, Tyr-288, and Glu-370 contribute to the thiamine diphosphate site. Asn-177 is a Mg(2+) binding site.

The protein belongs to the transketolase family. DXPS subfamily. As to quaternary structure, homodimer. Requires Mg(2+) as cofactor. The cofactor is thiamine diphosphate.

The catalysed reaction is D-glyceraldehyde 3-phosphate + pyruvate + H(+) = 1-deoxy-D-xylulose 5-phosphate + CO2. The protein operates within metabolic intermediate biosynthesis; 1-deoxy-D-xylulose 5-phosphate biosynthesis; 1-deoxy-D-xylulose 5-phosphate from D-glyceraldehyde 3-phosphate and pyruvate: step 1/1. In terms of biological role, catalyzes the acyloin condensation reaction between C atoms 2 and 3 of pyruvate and glyceraldehyde 3-phosphate to yield 1-deoxy-D-xylulose-5-phosphate (DXP). In Ralstonia nicotianae (strain ATCC BAA-1114 / GMI1000) (Ralstonia solanacearum), this protein is 1-deoxy-D-xylulose-5-phosphate synthase.